We begin with the raw amino-acid sequence, 25 residues long: Caerin-1.10 (25 aa).

A Leucine amide modification is found at Leu25.

This sequence belongs to the frog skin active peptide (FSAP) family. Caerin subfamily. Expressed by the skin dorsal glands.

The protein resides in the secreted. Functionally, antibacterial peptide with wide spectrum of activity. This is Caerin-1.10 from Litoria rothii (Roth's tree frog).